A 414-amino-acid polypeptide reads, in one-letter code: Ribulose bisphosphate carboxylase large chain (414 aa).

Positions 101 and 151 each coordinate substrate. Catalysis depends on Lys153, which acts as the Proton acceptor. Residue Lys155 participates in substrate binding. Positions 179, 181, and 182 each coordinate Mg(2+). Lys179 carries the N6-carboxylysine modification. Catalysis depends on His272, which acts as the Proton acceptor. Residues Arg273, His305, and Ser357 each coordinate substrate.

Belongs to the RuBisCO large chain family. Type I subfamily. In terms of assembly, heterohexadecamer of 8 large chains and 8 small chains; disulfide-linked. The disulfide link is formed within the large subunit homodimers. The cofactor is Mg(2+). Post-translationally, the disulfide bond which can form in the large chain dimeric partners within the hexadecamer appears to be associated with oxidative stress and protein turnover.

The protein localises to the plastid. It localises to the chloroplast. The enzyme catalyses 2 (2R)-3-phosphoglycerate + 2 H(+) = D-ribulose 1,5-bisphosphate + CO2 + H2O. It carries out the reaction D-ribulose 1,5-bisphosphate + O2 = 2-phosphoglycolate + (2R)-3-phosphoglycerate + 2 H(+). RuBisCO catalyzes two reactions: the carboxylation of D-ribulose 1,5-bisphosphate, the primary event in carbon dioxide fixation, as well as the oxidative fragmentation of the pentose substrate in the photorespiration process. Both reactions occur simultaneously and in competition at the same active site. The protein is Ribulose bisphosphate carboxylase large chain (rbcL) of Onychium japonicum (Japanese claw fern).